A 367-amino-acid polypeptide reads, in one-letter code: Cyclic AMP-responsive element-binding protein 3-like protein 4 (367 aa).

Positions 1-52 are required for transcriptional activation; the sequence is MELGCPELLEPPEDIFSTGSFLELGFNGPPSKVPGLQKSESDDFLNLFIDPN. The Cytoplasmic portion of the chain corresponds to 1 to 267; the sequence is MELGCPELLE…QTSSRAAQTS (267 aa). Residues 58–81 form a disordered region; sequence ETSPGSDSGVSEDPGSPAPQAPSS. A bZIP domain is found at 189 to 252; it reads ILKKIRRKIR…ISLVAQVHQL (64 aa). Residues 191 to 230 form a basic motif region; sequence KKIRRKIRNKQSAQDSRRRKKEYIDGLESRVAACSEQNQK. The tract at residues 231–252 is leucine-zipper; sequence LQRKVQELERQNISLVAQVHQL. Residues 268–288 traverse the membrane as a helical; Signal-anchor for type II membrane protein segment; sequence TCVLILLFSLALIILPSFSPF. Residues 289–367 lie on the Lumenal side of the membrane; sequence QSQPEARSEG…IRGMVHADEM (79 aa). A glycan (N-linked (GlcNAc...) asparagine) is linked at asparagine 338.

Belongs to the bZIP family. ATF subfamily. Binds DNA as a dimer. Forms a heterodimer with CREM isoform Delta. Controlled by regulated intramembrane proteolysis (RIP). Following ER stress a fragment containing the cytoplasmic transcription factor domain is released by proteolysis. The cleavage seems to be performed sequentially by site-1 and site-2 proteases (PS1 and PS2). PS1 cleavage may be suppressed by a determinant in the C-terminal region.

The protein localises to the endoplasmic reticulum membrane. Its subcellular location is the nucleus. Its function is as follows. Transcriptional activator that may play a role in the unfolded protein response. Binds to the UPR element (UPRE) but not to CRE element. Preferentially binds DNA with to the consensus sequence 5'-T[GT]ACGT[GA][GT]-3' and has transcriptional activation activity from UPRE. Binds to NF-kappa-B site and has transcriptional activation activity from NF-kappa-B-containing regulatory elements. Increases the binding of CREM isoform Delta with CRE. The CREM isoform Delta-CREB3L4 heterodimer functions through CRE but not through UPRE and may recruit HIRA to CRE to regulate histone exchange. The protein is Cyclic AMP-responsive element-binding protein 3-like protein 4 (Creb3l4) of Rattus norvegicus (Rat).